The chain runs to 1009 residues: Chitin synthase 2 (1009 aa).

Polar residues-rich tracts occupy residues M1–H12 and E34–Q62. 2 disordered regions span residues M1–Q62 and D175–S234. The segment covering E192–T202 has biased composition (acidic residues). A run of 7 helical transmembrane segments spans residues W647–T667, F682–V702, I722–S742, I757–V777, L804–F823, V930–F950, and A967–I987.

It belongs to the chitin synthase family.

It is found in the cell membrane. The enzyme catalyses [(1-&gt;4)-N-acetyl-beta-D-glucosaminyl](n) + UDP-N-acetyl-alpha-D-glucosamine = [(1-&gt;4)-N-acetyl-beta-D-glucosaminyl](n+1) + UDP + H(+). Polymerizes chitin, a structural polymer of the cell wall and septum, by transferring the sugar moiety of UDP-GlcNAc to the non-reducing end of the growing chitin polymer. The polypeptide is Chitin synthase 2 (CHS2) (Candida albicans (Yeast)).